Reading from the N-terminus, the 202-residue chain is MIGRLRGTLAEKQPPHLILDVNGLGYELEVPMTTLYRLPSVGEPLTLHTHLVVREDAQLLYGFAGKRERDFFRELIRLNGVGPKLALALMSSLEVDELIRCVQSQDTSALTKVPGVGKKTAERLLVELKNRFKAWETSPAMFALVPNQPDGPAPVNTAENDAVSALISLGYKPQEASKAISAIKEKGLSSEDMIRRALKGMI.

The tract at residues 1–64 (MIGRLRGTLA…EDAQLLYGFA (64 aa)) is domain I. Residues 65-143 (GKRERDFFRE…AWETSPAMFA (79 aa)) are domain II. The tract at residues 144-154 (LVPNQPDGPAP) is flexible linker. Positions 154-202 (PVNTAENDAVSALISLGYKPQEASKAISAIKEKGLSSEDMIRRALKGMI) are domain III.

The protein belongs to the RuvA family. In terms of assembly, homotetramer. Forms an RuvA(8)-RuvB(12)-Holliday junction (HJ) complex. HJ DNA is sandwiched between 2 RuvA tetramers; dsDNA enters through RuvA and exits via RuvB. An RuvB hexamer assembles on each DNA strand where it exits the tetramer. Each RuvB hexamer is contacted by two RuvA subunits (via domain III) on 2 adjacent RuvB subunits; this complex drives branch migration. In the full resolvosome a probable DNA-RuvA(4)-RuvB(12)-RuvC(2) complex forms which resolves the HJ.

The protein localises to the cytoplasm. The RuvA-RuvB-RuvC complex processes Holliday junction (HJ) DNA during genetic recombination and DNA repair, while the RuvA-RuvB complex plays an important role in the rescue of blocked DNA replication forks via replication fork reversal (RFR). RuvA specifically binds to HJ cruciform DNA, conferring on it an open structure. The RuvB hexamer acts as an ATP-dependent pump, pulling dsDNA into and through the RuvAB complex. HJ branch migration allows RuvC to scan DNA until it finds its consensus sequence, where it cleaves and resolves the cruciform DNA. The chain is Holliday junction branch migration complex subunit RuvA from Pseudomonas fluorescens (strain Pf0-1).